A 92-amino-acid polypeptide reads, in one-letter code: Small ribosomal subunit protein uS19 (92 aa).

The protein belongs to the universal ribosomal protein uS19 family.

Functionally, protein S19 forms a complex with S13 that binds strongly to the 16S ribosomal RNA. The sequence is that of Small ribosomal subunit protein uS19 from Acholeplasma laidlawii (strain PG-8A).